We begin with the raw amino-acid sequence, 166 residues long: Ribonuclease H2 subunit C (166 aa).

Met-1 is subject to N-acetylmethionine.

Belongs to the RNase H2 subunit C family. As to quaternary structure, the RNase H2 complex is a heterotrimer composed of the catalytic subunit RNASEH2A and the non-catalytic subunits RNASEH2B and RNASEH2C.

Its subcellular location is the nucleus. Functionally, non catalytic subunit of RNase H2, an endonuclease that specifically degrades the RNA of RNA:DNA hybrids. Participates in DNA replication, possibly by mediating the removal of lagging-strand Okazaki fragment RNA primers during DNA replication. Mediates the excision of single ribonucleotides from DNA:RNA duplexes. This is Ribonuclease H2 subunit C (Rnaseh2c) from Mus musculus (Mouse).